We begin with the raw amino-acid sequence, 297 residues long: Proline iminopeptidase (297 aa).

An AB hydrolase-1 domain is found at Val26–Ser131. The Nucleophile role is filled by Ser103. The active site involves Asp243. Residue His270 is the Proton donor of the active site.

It belongs to the peptidase S33 family. As to quaternary structure, monomer.

It catalyses the reaction Release of N-terminal proline from a peptide.. Its function is as follows. Releases the N-terminal proline from various substrates. This is Proline iminopeptidase (fpaP) from Flavobacterium johnsoniae (strain ATCC 17061 / DSM 2064 / JCM 8514 / BCRC 14874 / CCUG 350202 / NBRC 14942 / NCIMB 11054 / UW101) (Cytophaga johnsonae).